A 222-amino-acid chain; its full sequence is Oligoribonuclease (222 aa).

A disordered region spans residues 19–38 (PMASSSSTGKQEESVNGSLE). Polar residues predominate over residues 21–35 (ASSSSTGKQEESVNG). The Exonuclease domain occupies 46-210 (LVWIDLEMTG…DDIRESIKEL (165 aa)). Residue His-167 is part of the active site.

Belongs to the oligoribonuclease family.

In terms of biological role, 3'-to-5' exoribonuclease specific for small oligoribonucleotides. The chain is Oligoribonuclease from Arabidopsis thaliana (Mouse-ear cress).